The following is a 1104-amino-acid chain: Receptor-type guanylate cyclase gcy-15 (1104 aa).

Topologically, residues 1 to 431 are extracellular; that stretch reads MEIAINRLNA…ENCGPPANNT (431 aa). 6 N-linked (GlcNAc...) asparagine glycosylation sites follow: Asn-43, Asn-237, Asn-263, Asn-287, Asn-407, and Asn-429. Residues 432–452 form a helical membrane-spanning segment; it reads FIIVISVGVAVLIGLAIAAAF. The Cytoplasmic portion of the chain corresponds to 453–1104; sequence LYKRYRYERR…QIQEKTYEFS (652 aa). Residues 528 to 823 form the Protein kinase domain; sequence FNTGSTARAG…QIKRKLKPLT (296 aa). ATP contacts are provided by residues 534 to 542 and Lys-576; that span reads ARAGPFGPI. Positions 838-871 form a coiled coil; the sequence is IEKYTDKLEKDIAERNEELEAEKAKSEALLKMML. In terms of domain architecture, Guanylate cyclase spans 894–1024; sequence TVFFSDCPGF…DTVNTASRME (131 aa).

This sequence belongs to the adenylyl cyclase class-4/guanylyl cyclase family. Expressed bilaterally in ASG sensory neurons.

It localises to the cell membrane. The enzyme catalyses GTP = 3',5'-cyclic GMP + diphosphate. Its function is as follows. Guanylate cyclase involved in the production of the second messenger cGMP. This Caenorhabditis elegans protein is Receptor-type guanylate cyclase gcy-15.